The primary structure comprises 75 residues: DNA-directed RNA polymerase subunit omega (75 aa).

The protein belongs to the RNA polymerase subunit omega family. As to quaternary structure, the RNAP catalytic core consists of 2 alpha, 1 beta, 1 beta' and 1 omega subunit. When a sigma factor is associated with the core the holoenzyme is formed, which can initiate transcription.

The enzyme catalyses RNA(n) + a ribonucleoside 5'-triphosphate = RNA(n+1) + diphosphate. Its function is as follows. Promotes RNA polymerase assembly. Latches the N- and C-terminal regions of the beta' subunit thereby facilitating its interaction with the beta and alpha subunits. The protein is DNA-directed RNA polymerase subunit omega of Thermosipho melanesiensis (strain DSM 12029 / CIP 104789 / BI429).